Consider the following 92-residue polypeptide: Small ribosomal subunit protein uS19 (92 aa).

Belongs to the universal ribosomal protein uS19 family.

Protein S19 forms a complex with S13 that binds strongly to the 16S ribosomal RNA. This is Small ribosomal subunit protein uS19 from Gloeothece citriformis (strain PCC 7424) (Cyanothece sp. (strain PCC 7424)).